A 349-amino-acid polypeptide reads, in one-letter code: Probable dual-specificity RNA methyltransferase RlmN (349 aa).

Glutamate 94 (proton acceptor) is an active-site residue. The Radical SAM core domain maps to 100–324 (YKTHTSICLS…NKNNVNTTIR (225 aa)). The cysteines at positions 107 and 335 are disulfide-linked. [4Fe-4S] cluster contacts are provided by cysteine 114, cysteine 118, and cysteine 121. S-adenosyl-L-methionine is bound by residues 161-162 (GE), serine 193, 216-218 (SLH), and asparagine 292. Cysteine 335 acts as the S-methylcysteine intermediate in catalysis.

Belongs to the radical SAM superfamily. RlmN family. The cofactor is [4Fe-4S] cluster.

It is found in the cytoplasm. The enzyme catalyses adenosine(2503) in 23S rRNA + 2 reduced [2Fe-2S]-[ferredoxin] + 2 S-adenosyl-L-methionine = 2-methyladenosine(2503) in 23S rRNA + 5'-deoxyadenosine + L-methionine + 2 oxidized [2Fe-2S]-[ferredoxin] + S-adenosyl-L-homocysteine. It catalyses the reaction adenosine(37) in tRNA + 2 reduced [2Fe-2S]-[ferredoxin] + 2 S-adenosyl-L-methionine = 2-methyladenosine(37) in tRNA + 5'-deoxyadenosine + L-methionine + 2 oxidized [2Fe-2S]-[ferredoxin] + S-adenosyl-L-homocysteine. Its function is as follows. Specifically methylates position 2 of adenine 2503 in 23S rRNA and position 2 of adenine 37 in tRNAs. This Finegoldia magna (strain ATCC 29328 / DSM 20472 / WAL 2508) (Peptostreptococcus magnus) protein is Probable dual-specificity RNA methyltransferase RlmN.